Here is a 91-residue protein sequence, read N- to C-terminus: DNA/RNA-binding protein Alba (91 aa).

Lysine 11 carries the N6-acetyllysine modification.

This sequence belongs to the histone-like Alba family. Post-translationally, acetylated. Acetylation at Lys-11 decreases DNA-binding affinity.

Its subcellular location is the cytoplasm. The protein localises to the chromosome. Binds double-stranded DNA tightly but without sequence specificity. Incubation with DNA in vitro gives fibrous structures 10.3 +/- 1.1 nm in thickness (naked DNA is 1.83 +/- 0.37 nm). This protein does not significantly compact DNA. This chain is DNA/RNA-binding protein Alba, found in Thermococcus kodakarensis (strain ATCC BAA-918 / JCM 12380 / KOD1) (Pyrococcus kodakaraensis (strain KOD1)).